A 158-amino-acid polypeptide reads, in one-letter code: Ribosome maturation factor RimP (158 aa).

Belongs to the RimP family.

It localises to the cytoplasm. Required for maturation of 30S ribosomal subunits. The sequence is that of Ribosome maturation factor RimP from Streptococcus uberis (strain ATCC BAA-854 / 0140J).